Consider the following 149-residue polypeptide: Putative pre-16S rRNA nuclease (149 aa).

The protein belongs to the YqgF nuclease family.

It localises to the cytoplasm. Could be a nuclease involved in processing of the 5'-end of pre-16S rRNA. This chain is Putative pre-16S rRNA nuclease, found in Burkholderia orbicola (strain MC0-3).